Reading from the N-terminus, the 3095-residue chain is HD protein homolog (3095 aa).

5 disordered regions span residues 105-197 (PHQH…NGNA), 536-561 (QQQQ…TMSG), 1312-1371 (PPQQ…STVI), 1509-1547 (KSTS…TTPS), and 2005-2037 (KELT…KEEE). Over residues 115-139 (STNLTDHLSQNSVTPSVPTTPNYQQ) the composition is skewed to polar residues. Composition is skewed to low complexity over residues 140–197 (SPST…NGNA) and 536–551 (QQQQ…QQQQ). The segment covering 552–561 (HNLTSSTMSG) has biased composition (polar residues). Low complexity-rich tracts occupy residues 1315 to 1368 (QQQQ…LNNS), 1510 to 1547 (STSS…TTPS), and 2008 to 2018 (TNNNNNNNNNI).

Belongs to the huntingtin family.

The protein localises to the cytoplasm. The protein resides in the nucleus. Its function is as follows. May play a role in microtubule-mediated transport or vesicle function. The polypeptide is HD protein homolog (htt) (Dictyostelium discoideum (Social amoeba)).